The primary structure comprises 434 residues: Oxysterol-binding protein homolog 5 (434 aa).

Residues 18–371 (SSFNGDLSSL…KQVDYMNENT (354 aa)) are OSBP-related domain (ORD). 24 to 29 (LSSLSA) contacts a 1,2-diacyl-sn-glycero-3-phospho-(1D-myo-inositol 4-phosphate). Residue glutamine 96 coordinates 20-hydroxycholesterol. Glutamine 96 contributes to the 25-hydroxycholesterol binding site. Residues glutamine 96 and arginine 100 each contribute to the 7beta-hydroxycholesterol site. Glutamine 96 provides a ligand contact to cholesterol. Glutamine 96 is a binding site for ergosterol. Residues 109–112 (KPLN), 143–144 (HH), lysine 335, glutamate 339, and arginine 343 each bind a 1,2-diacyl-sn-glycero-3-phospho-(1D-myo-inositol 4-phosphate). Serine 389 bears the Phosphoserine mark.

The protein belongs to the OSBP family.

The protein resides in the vacuole membrane. It localises to the bud neck. Functionally, lipid transport protein (LTP) involved in non-vesicular transfer of lipids between membranes. Functions in phosphoinositide-coupled directional transport of various lipids by carrying the lipid molecule in a hydrophobic pocket and transferring it between membranes through the cytosol. Involved in maintenance of intracellular sterol distribution and homeostasis. Plays a role in ergosterol synthesis. Binds and transports sterol. May be involved in ergosterol transport from the plasma membrane (PM) to the ER. The polypeptide is Oxysterol-binding protein homolog 5 (Saccharomyces cerevisiae (strain ATCC 204508 / S288c) (Baker's yeast)).